Reading from the N-terminus, the 154-residue chain is Calmodulin-like protein 6 (154 aa).

4 consecutive EF-hand domains span residues 1–36, 37–72, 77–112, and 115–150; these read MDST…LGII, IPED…IMVE, VGEE…LGLK, and KTLE…GRFF. Positions 14, 16, 18, 20, 25, 50, 52, 54, 56, 61, 90, 92, 94, 101, 128, 130, 132, 134, and 139 each coordinate Ca(2+).

This sequence belongs to the calmodulin family.

In terms of biological role, potential calcium sensor. This chain is Calmodulin-like protein 6 (CML6), found in Arabidopsis thaliana (Mouse-ear cress).